Consider the following 206-residue polypeptide: Superoxide dismutase [Mn] (206 aa).

Mn(2+) is bound by residues H27, H82, D168, and H172.

The protein belongs to the iron/manganese superoxide dismutase family. Mn(2+) serves as cofactor.

It carries out the reaction 2 superoxide + 2 H(+) = H2O2 + O2. Destroys superoxide anion radicals which are normally produced within the cells and which are toxic to biological systems. This is Superoxide dismutase [Mn] (sodA) from Lactococcus lactis subsp. lactis (strain IL1403) (Streptococcus lactis).